Reading from the N-terminus, the 520-residue chain is Cholesterol side-chain cleavage enzyme, mitochondrial (520 aa).

A mitochondrion-targeting transit peptide spans 1-39 (MLARGLALRSVLVKGCQPFLSAPRECPGHPRVGTGEGAC). C461 lines the heme pocket.

The protein belongs to the cytochrome P450 family. Interacts with FDX1/adrenodoxin. Requires heme as cofactor.

It is found in the mitochondrion inner membrane. The enzyme catalyses 6 reduced [adrenodoxin] + cholesterol + 3 O2 + 6 H(+) = 4-methylpentanal + pregnenolone + 6 oxidized [adrenodoxin] + 4 H2O. It catalyses the reaction 2 reduced [adrenodoxin] + cholesterol + O2 + 2 H(+) = (22R)-hydroxycholesterol + 2 oxidized [adrenodoxin] + H2O. The catalysed reaction is (22R)-hydroxycholesterol + 2 reduced [adrenodoxin] + O2 + 2 H(+) = (20R,22R)-20,22-dihydroxycholesterol + 2 oxidized [adrenodoxin] + H2O. It carries out the reaction (20R,22R)-20,22-dihydroxycholesterol + 2 reduced [adrenodoxin] + O2 + 2 H(+) = 4-methylpentanal + pregnenolone + 2 oxidized [adrenodoxin] + 2 H2O. Its pathway is lipid metabolism; C21-steroid hormone metabolism. It functions in the pathway steroid metabolism; cholesterol metabolism. In terms of biological role, a cytochrome P450 monooxygenase that catalyzes the side-chain hydroxylation and cleavage of cholesterol to pregnenolone, the precursor of most steroid hormones. Catalyzes three sequential oxidation reactions of cholesterol, namely the hydroxylation at C22 followed with the hydroxylation at C20 to yield 20R,22R-hydroxycholesterol that is further cleaved between C20 and C22 to yield the C21-steroid pregnenolone and 4-methylpentanal. Mechanistically, uses molecular oxygen inserting one oxygen atom into a substrate and reducing the second into a water molecule. Two electrons are provided by NADPH via a two-protein mitochondrial transfer system comprising flavoprotein FDXR (adrenodoxin/ferredoxin reductase) and nonheme iron-sulfur protein FDX1 or FDX2 (adrenodoxin/ferredoxin). This Sus scrofa (Pig) protein is Cholesterol side-chain cleavage enzyme, mitochondrial (CYP11A1).